The sequence spans 580 residues: Alpha-thujene synthase, chloroplastic (580 aa).

Residues 1–32 constitute a chloroplast transit peptide; it reads MALQLLTPSFSFQHSPSPHKLTTLRYTHHRIR. R296, D333, D337, R473, and D476 together coordinate (2E)-geranyl diphosphate. Mg(2+) contacts are provided by D333 and D337. The DDXXD motif motif lies at 333–337; the sequence is DDVYD. Mg(2+)-binding residues include D476, T480, and E484.

It belongs to the terpene synthase family. Tpsb subfamily. Monomer. Requires Mg(2+) as cofactor. It depends on Mn(2+) as a cofactor. In terms of tissue distribution, expressed in developing and mature fruits. Barely detectable in leaves and shoots.

It is found in the plastid. The protein resides in the chloroplast. The catalysed reaction is (2E)-geranyl diphosphate = alpha-thujene + diphosphate. It functions in the pathway secondary metabolite biosynthesis; terpenoid biosynthesis. In terms of biological role, monoterpene synthase (TPS) involved in the biosynthesis of monoterpene natural products used by traditional Chinese medicine to treat headache, inflammation and intoxication. Catalyzes the conversion of (2E)-geranyl diphosphate (GPP) into alpha-thujene. The polypeptide is Alpha-thujene synthase, chloroplastic (Litsea cubeba (Aromatic litsea)).